The primary structure comprises 256 residues: Ribosomal RNA small subunit methyltransferase J (256 aa).

S-adenosyl-L-methionine-binding positions include 101–102, 117–118, and Asp-174; these read RD and ER.

It belongs to the methyltransferase superfamily. RsmJ family.

It localises to the cytoplasm. The enzyme catalyses guanosine(1516) in 16S rRNA + S-adenosyl-L-methionine = N(2)-methylguanosine(1516) in 16S rRNA + S-adenosyl-L-homocysteine + H(+). Specifically methylates the guanosine in position 1516 of 16S rRNA. The chain is Ribosomal RNA small subunit methyltransferase J from Chromohalobacter salexigens (strain ATCC BAA-138 / DSM 3043 / CIP 106854 / NCIMB 13768 / 1H11).